The chain runs to 407 residues: Peptidase T (407 aa).

Zn(2+) is bound at residue histidine 81. Aspartate 83 is a catalytic residue. A Zn(2+)-binding site is contributed by aspartate 142. The active-site Proton acceptor is the glutamate 176. Zn(2+) is bound by residues glutamate 177, aspartate 199, and histidine 381.

It belongs to the peptidase M20B family. It depends on Zn(2+) as a cofactor.

The protein resides in the cytoplasm. It catalyses the reaction Release of the N-terminal residue from a tripeptide.. Its function is as follows. Cleaves the N-terminal amino acid of tripeptides. The chain is Peptidase T from Streptococcus pneumoniae (strain Taiwan19F-14).